We begin with the raw amino-acid sequence, 198 residues long: MNYLYLIILGIVCYFIGNISGSIAISKLVYKQDIRNYGSKNAGATNALRVYGVKVGLATFLIDFFKGLLCAYLGFKFYGSLGILVCGLLCVIGHILPVLYNFKGGKGIATSFGVLLFAQPLQVLILLILFLIVVLMTKYVSLGSVLGCISAVIYGLIYIRKDFYIGLIYILLGIISLFKHRSNINRLIHGKESKLGKN.

6 consecutive transmembrane segments (helical) span residues 5 to 25 (YLII…SIAI), 55 to 75 (VGLA…YLGF), 79 to 99 (GSLG…LPVL), 114 to 134 (VLLF…LIVV), 139 to 159 (YVSL…LIYI), and 164 to 184 (YIGL…RSNI).

This sequence belongs to the PlsY family. As to quaternary structure, probably interacts with PlsX.

Its subcellular location is the cell membrane. It carries out the reaction an acyl phosphate + sn-glycerol 3-phosphate = a 1-acyl-sn-glycero-3-phosphate + phosphate. The protein operates within lipid metabolism; phospholipid metabolism. Catalyzes the transfer of an acyl group from acyl-phosphate (acyl-PO(4)) to glycerol-3-phosphate (G3P) to form lysophosphatidic acid (LPA). This enzyme utilizes acyl-phosphate as fatty acyl donor, but not acyl-CoA or acyl-ACP. In Finegoldia magna (strain ATCC 29328 / DSM 20472 / WAL 2508) (Peptostreptococcus magnus), this protein is Glycerol-3-phosphate acyltransferase.